The chain runs to 1094 residues: DNA polymerase delta catalytic subunit (1094 aa).

Residues C1003, C1006, C1016, and C1019 each contribute to the Zn(2+) site. The CysA-type zinc finger occupies C1003–C1019. 4 residues coordinate [4Fe-4S] cluster: C1049, C1052, C1062, and C1067. A CysB motif motif is present at residues C1049 to C1067.

Belongs to the DNA polymerase type-B family. Heterodimer composed of a catalytic subunit POLD and a small regulatory subunit. Requires [4Fe-4S] cluster as cofactor. Mg(2+) is required as a cofactor.

Its subcellular location is the nucleus. It catalyses the reaction DNA(n) + a 2'-deoxyribonucleoside 5'-triphosphate = DNA(n+1) + diphosphate. Its activity is regulated as follows. The small regulatory subunit delta and PCNA1 increase POLD catalytic activity. In terms of biological role, this polymerase possesses two enzymatic activities: DNA synthesis (polymerase) and an exonucleolytic activity that degrades single-stranded DNA in the 3'- to 5'-direction. This chain is DNA polymerase delta catalytic subunit (POLD), found in Plasmodium falciparum (isolate K1 / Thailand).